The sequence spans 414 residues: Wilms tumor protein homolog A (414 aa).

Glycyl lysine isopeptide (Lys-Gly) (interchain with G-Cter in SUMO) cross-links involve residues lysine 55 and lysine 158. The 9aaTAD motif lies at 217-225 (MTWNQMNLG). C2H2-type zinc fingers lie at residues 288 to 312 (FMCA…SRKH), 318 to 342 (YQCD…QRRH), and 348 to 370 (FQCK…TRTH). Important for interaction with target DNA regions lie at residues 332-346 (SDQL…TGIK) and 358-366 (SRSDHLKTH). A KTS motif motif is present at residues 373–375 (KTS). Residues 379–403 (FSCRWPSCQKKFARSDELVRHHNMH) form a C2H2-type 4 zinc finger.

It belongs to the EGR C2H2-type zinc-finger protein family. As to expression, expressed around the pronephric anlage and in the pronephros; expression is restricted to the splanchnic mesoderm (the site where the glomus forms) from tailbud stages, and the glomus of early tadpoles. Not expressed in the pronephric tubules or pronephric duct. In tadpoles (stage 38-39), additional expression begins in the heart. Also expressed in the adult kidney (mesonephros).

The protein localises to the nucleus. It is found in the cytoplasm. It localises to the nucleus speckle. Transcription factor required for development of the vascular component of the pronephric kidney, the glomus; may repress tubule-specific gene expression in the portion of the pronephros fated to form the glomus. Recognizes and binds to the DNA sequence 5'-GCG(T/G)GGGCG-3'. Inhibits Wnt-signaling during embryonic development. Function may be isoform-specific: the isoform containing the KTS motif is less effective in inhibiting wnt signaling. In Xenopus laevis (African clawed frog), this protein is Wilms tumor protein homolog A (wt1-a).